A 913-amino-acid polypeptide reads, in one-letter code: DNA polymerase I (913 aa).

One can recognise a 5'-3' exonuclease domain in the interval 1–305 (MSQAPLVLVD…AGENGEAETP (305 aa)). A 3'-5' exonuclease domain is found at 306–501 (IQAEVDYDVV…LHQALWQKLE (196 aa)). A polymerase region spans residues 505-913 (SLARVLTDIE…GVGSNWDEAH (409 aa)).

It belongs to the DNA polymerase type-A family. As to quaternary structure, single-chain monomer with multiple functions.

It catalyses the reaction DNA(n) + a 2'-deoxyribonucleoside 5'-triphosphate = DNA(n+1) + diphosphate. Its function is as follows. In addition to polymerase activity, this DNA polymerase exhibits 3'-5' and 5'-3' exonuclease activity. In Pseudomonas aeruginosa (strain ATCC 15692 / DSM 22644 / CIP 104116 / JCM 14847 / LMG 12228 / 1C / PRS 101 / PAO1), this protein is DNA polymerase I (polA).